Consider the following 571-residue polypeptide: Putative F-box protein At5g39460 (571 aa).

Positions 9–55 (ACLLLTLPEDVFAVISRFLSPSDICNLILCGKSLCALVDSEKTWLVQ) constitute an F-box domain.

This chain is Putative F-box protein At5g39460, found in Arabidopsis thaliana (Mouse-ear cress).